A 363-amino-acid chain; its full sequence is Proline/serine-rich coiled-coil protein 1 (363 aa).

Ser-22 carries the post-translational modification Phosphoserine. Copy 1 of the repeat occupies Pro-38–Pro-41. Residues Glu-39–Gly-67 form a disordered region. Leu-42 carries the post-translational modification Phosphoserine. Gly-45 bears the Phosphothreonine mark. A phosphoserine mark is found at Ser-47, Ser-65, Ser-70, Ser-98, Ser-122, and Ser-140. Repeat 2 spans residues Pro-68 to Pro-71. The stretch at Ser-70–Gln-94 forms a coiled coil. The tract at residues Asp-95–Arg-363 is disordered. The 4 X 4 AA repeats of P-X-X-P stretch occupies residues Leu-103–Pro-246. A compositionally biased stretch (basic and acidic residues) spans Pro-112 to Val-124. Residues Ser-133 to Leu-148 show a composition bias toward low complexity. Thr-145 is subject to Phosphothreonine. Ser-186 and Ser-190 each carry phosphoserine. The segment covering Ser-186–Thr-196 has biased composition (polar residues). The span at Pro-197–Ala-210 shows a compositional bias: low complexity. At Ser-212 the chain carries Phosphoserine. A Phosphothreonine modification is found at Thr-215. 2 tandem repeats follow at residues Pro-238–Pro-241 and Pro-243–Pro-246.

This sequence belongs to the PSRC1 family. As to quaternary structure, interacts with APC2. Interacts with KIF2A. Interacts with ANKRD53; recruits ANKRD53 to the spindle during mitosis. Post-translationally, phosphorylated during mitosis. As to expression, widely expressed in adult and fetal tissues, with highest expression in the adult brain and fetal thymus. Not detected in adult skeletal muscle.

The protein localises to the cytoplasm. The protein resides in the cytoskeleton. It is found in the spindle. It localises to the spindle pole. Its function is as follows. Required for normal progression through mitosis. Required for normal congress of chromosomes at the metaphase plate, and for normal rate of chromosomal segregation during anaphase. Plays a role in the regulation of mitotic spindle dynamics. Increases the rate of turnover of microtubules on metaphase spindles, and contributes to the generation of normal tension across sister kinetochores. Recruits KIF2A and ANKRD53 to the mitotic spindle and spindle poles. May participate in p53/TP53-regulated growth suppression. In Homo sapiens (Human), this protein is Proline/serine-rich coiled-coil protein 1 (PSRC1).